The following is a 464-amino-acid chain: Sushi repeat-containing protein SRPX (464 aa).

An N-terminal signal peptide occupies residues Met-1–Ser-30. O-linked (Xyl...) (chondroitin sulfate) serine glycosylation is present at Ser-34. Cystine bridges form between Cys-57/Cys-85, Cys-69/Cys-103, Cys-89/Cys-115, Cys-120/Cys-161, and Cys-147/Cys-174. 2 Sushi domains span residues Cys-57–Gln-117 and Lys-118–Asp-176. Residues Met-177–Val-259 form the HYR domain. Residues Lys-260 to Ala-319 form the Sushi 3 domain. 2 disulfides stabilise this stretch: Cys-262/Cys-304 and Cys-290/Cys-317.

As to expression, detected in fibroblasts (at protein level). Retina and heart; less in placenta, pancreas, lung, liver, skeletal muscle, kidney and brain.

It is found in the cell surface. Functionally, may be involved in phagocytosis during disk shedding, cell adhesion to cells other than the pigment epithelium or signal transduction. This Homo sapiens (Human) protein is Sushi repeat-containing protein SRPX (SRPX).